Here is a 111-residue protein sequence, read N- to C-terminus: Large ribosomal subunit protein uL22 (111 aa).

This sequence belongs to the universal ribosomal protein uL22 family. Part of the 50S ribosomal subunit.

In terms of biological role, this protein binds specifically to 23S rRNA; its binding is stimulated by other ribosomal proteins, e.g. L4, L17, and L20. It is important during the early stages of 50S assembly. It makes multiple contacts with different domains of the 23S rRNA in the assembled 50S subunit and ribosome. Functionally, the globular domain of the protein is located near the polypeptide exit tunnel on the outside of the subunit, while an extended beta-hairpin is found that lines the wall of the exit tunnel in the center of the 70S ribosome. The chain is Large ribosomal subunit protein uL22 from Clostridium kluyveri (strain NBRC 12016).